The following is a 564-amino-acid chain: Interactor of constitutive active ROPs 3 (564 aa).

Disordered stretches follow at residues 1-73 (MQTQ…SRIT) and 88-135 (KAKD…SALE). A compositionally biased stretch (polar residues) spans 33–44 (ESSSSPISATNR). Basic and acidic residues-rich tracts occupy residues 63-73 (VSEKKRPSRIT) and 98-123 (TSKK…KLEE). 2 coiled-coil regions span residues 70 to 133 (SRIT…ETSA) and 231 to 514 (AETE…AATA). A Phosphoserine modification is found at Ser533.

This sequence belongs to the ICR family. As to quaternary structure, interacts with ARAC11 in vitro. As to expression, expressed in flowers.

Its function is as follows. Acts as a scaffold, mediating interaction of ROPs with different proteins. This Arabidopsis thaliana (Mouse-ear cress) protein is Interactor of constitutive active ROPs 3 (ICR3).